An 861-amino-acid chain; its full sequence is Leucine--tRNA ligase (861 aa).

Positions 42–52 (PYPSGRIHMGH) match the 'HIGH' region motif. The short motif at 623–627 (KMSKS) is the 'KMSKS' region element. Lysine 626 lines the ATP pocket.

The protein belongs to the class-I aminoacyl-tRNA synthetase family.

It localises to the cytoplasm. The enzyme catalyses tRNA(Leu) + L-leucine + ATP = L-leucyl-tRNA(Leu) + AMP + diphosphate. The protein is Leucine--tRNA ligase of Caulobacter sp. (strain K31).